The following is a 209-amino-acid chain: Large ribosomal subunit protein uL3 (209 aa).

Residues 117–142 (FQGPIKRHGQSRGPETHGSRYHRRPG) form a disordered region.

Belongs to the universal ribosomal protein uL3 family. As to quaternary structure, part of the 50S ribosomal subunit. Forms a cluster with proteins L14 and L19.

Functionally, one of the primary rRNA binding proteins, it binds directly near the 3'-end of the 23S rRNA, where it nucleates assembly of the 50S subunit. This chain is Large ribosomal subunit protein uL3, found in Clostridioides difficile (strain 630) (Peptoclostridium difficile).